The chain runs to 365 residues: Aminomethyltransferase (365 aa).

The protein belongs to the GcvT family. As to quaternary structure, the glycine cleavage system is composed of four proteins: P, T, L and H.

The catalysed reaction is N(6)-[(R)-S(8)-aminomethyldihydrolipoyl]-L-lysyl-[protein] + (6S)-5,6,7,8-tetrahydrofolate = N(6)-[(R)-dihydrolipoyl]-L-lysyl-[protein] + (6R)-5,10-methylene-5,6,7,8-tetrahydrofolate + NH4(+). Its function is as follows. The glycine cleavage system catalyzes the degradation of glycine. This is Aminomethyltransferase from Chlorobium luteolum (strain DSM 273 / BCRC 81028 / 2530) (Pelodictyon luteolum).